Consider the following 765-residue polypeptide: Dipeptidyl peptidase 4 (765 aa).

The Cytoplasmic portion of the chain corresponds to 1-6 (MKTPWK). Residues 7-29 (VLLGLLAIAALVTVITVPVVLLT) form a helical; Signal-anchor for type II membrane protein membrane-spanning segment. The Extracellular portion of the chain corresponds to 30–765 (KGNDASTDSR…HFLKQCFSLL (736 aa)). 9 N-linked (GlcNAc...) asparagine glycosylation sites follow: Asn-84, Asn-91, Asn-149, Asn-218, Asn-228, Asn-271, Asn-280, Asn-320, and Asn-392. Cystine bridges form between Cys-384-Cys-393, Cys-443-Cys-446, and Cys-453-Cys-471. N-linked (GlcNAc...) asparagine glycosylation is present at Asn-495. Catalysis depends on Ser-629, which acts as the Charge relay system. A disulfide bridge links Cys-648 with Cys-761. Asn-684 carries an N-linked (GlcNAc...) asparagine glycan. Active-site charge relay system residues include Asp-707 and His-739.

The protein belongs to the peptidase S9B family. DPPIV subfamily. As to quaternary structure, monomer. Homodimer. Heterodimer with Seprase (FAP). Requires homodimerization for optimal dipeptidyl peptidase activity and T-cell costimulation. Found in a membrane raft complex, at least composed of BCL10, CARD11, DPP4 and IKBKB. Associates with collagen. Interacts with PTPRC; the interaction is enhanced in an interleukin-12-dependent manner in activated lymphocytes. Interacts (via extracellular domain) with ADA; does not inhibit its dipeptidyl peptidase activity. Interacts with CAV1 (via the N-terminus); the interaction is direct. Interacts (via cytoplasmic tail) with CARD11 (via PDZ domain); its homodimerization is necessary for interaction with CARD11. Interacts with IGF2R; the interaction is direct. Interacts with GPC3. In terms of processing, the soluble form (Dipeptidyl peptidase 4 soluble form also named SDPP) derives from the membrane form (Dipeptidyl peptidase 4 membrane form also named MDPP) by proteolytic processing. Post-translationally, N- and O-Glycosylated. Phosphorylated. Mannose 6-phosphate residues in the carbohydrate moiety are necessary for interaction with IGF2R in activated T-cells. Mannose 6-phosphorylation is induced during T-cell activation. As to expression, intestinal epithelium, dendritic cells and several immune system tissues.

It is found in the secreted. It localises to the cell membrane. The protein resides in the apical cell membrane. The protein localises to the cell projection. Its subcellular location is the invadopodium membrane. It is found in the lamellipodium membrane. It localises to the cell junction. The protein resides in the membrane raft. The enzyme catalyses Release of an N-terminal dipeptide, Xaa-Yaa-|-Zaa-, from a polypeptide, preferentially when Yaa is Pro, provided Zaa is neither Pro nor hydroxyproline.. Its activity is regulated as follows. Inhibited by GPC3 and diprotin A. Cell surface glycoprotein receptor involved in the costimulatory signal essential for T-cell receptor (TCR)-mediated T-cell activation. Acts as a positive regulator of T-cell coactivation, by binding at least ADA, CAV1, IGF2R, and PTPRC. Its binding to CAV1 and CARD11 induces T-cell proliferation and NF-kappa-B activation in a T-cell receptor/CD3-dependent manner. Its interaction with ADA also regulates lymphocyte-epithelial cell adhesion. In association with FAP is involved in the pericellular proteolysis of the extracellular matrix (ECM), the migration and invasion of endothelial cells into the ECM. May be involved in the promotion of lymphatic endothelial cells adhesion, migration and tube formation. When overexpressed, enhanced cell proliferation, a process inhibited by GPC3. Also acts as a serine exopeptidase with a dipeptidyl peptidase activity that regulates various physiological processes by cleaving peptides in the circulation, including many chemokines, mitogenic growth factors, neuropeptides and peptide hormones. Removes N-terminal dipeptides sequentially from polypeptides having unsubstituted N-termini provided that the penultimate residue is proline. This is Dipeptidyl peptidase 4 (DPP4) from Bos taurus (Bovine).